The sequence spans 156 residues: Ribosomal RNA large subunit methyltransferase H (156 aa).

S-adenosyl-L-methionine-binding positions include Leu-72, Gly-104, and 123-128 (FGAMVW).

Belongs to the RNA methyltransferase RlmH family. Homodimer.

It is found in the cytoplasm. The catalysed reaction is pseudouridine(1915) in 23S rRNA + S-adenosyl-L-methionine = N(3)-methylpseudouridine(1915) in 23S rRNA + S-adenosyl-L-homocysteine + H(+). Its function is as follows. Specifically methylates the pseudouridine at position 1915 (m3Psi1915) in 23S rRNA. The sequence is that of Ribosomal RNA large subunit methyltransferase H from Dinoroseobacter shibae (strain DSM 16493 / NCIMB 14021 / DFL 12).